A 329-amino-acid polypeptide reads, in one-letter code: DNA-directed RNA polymerase subunit alpha (329 aa).

Residues 1 to 235 (MQGSVTEFLK…EQLDAFVDLR (235 aa)) are alpha N-terminal domain (alpha-NTD). Residues 249 to 329 (FDPILLRPVD…NWPPASIAED (81 aa)) are alpha C-terminal domain (alpha-CTD).

The protein belongs to the RNA polymerase alpha chain family. In terms of assembly, homodimer. The RNAP catalytic core consists of 2 alpha, 1 beta, 1 beta' and 1 omega subunit. When a sigma factor is associated with the core the holoenzyme is formed, which can initiate transcription.

It carries out the reaction RNA(n) + a ribonucleoside 5'-triphosphate = RNA(n+1) + diphosphate. Its function is as follows. DNA-dependent RNA polymerase catalyzes the transcription of DNA into RNA using the four ribonucleoside triphosphates as substrates. The sequence is that of DNA-directed RNA polymerase subunit alpha from Mannheimia succiniciproducens (strain KCTC 0769BP / MBEL55E).